A 324-amino-acid polypeptide reads, in one-letter code: Proto-oncogene Mas (324 aa).

At 1–35 (MDQSNMTSFAEEKAMNTSSRNASLGTSHPPIPIVH) the chain is on the extracellular side. N-linked (GlcNAc...) asparagine glycans are attached at residues asparagine 5, asparagine 16, and asparagine 21. Residues 36-60 (WVIMSISPLGFVENGILLWFLCFRM) traverse the membrane as a helical segment. The Cytoplasmic segment spans residues 61-64 (RRNP). Residues 65-86 (FTVYITHLSIADISLLFCIFIL) form a helical membrane-spanning segment. The Extracellular segment spans residues 87 to 103 (SIDYALDYELSSGHYYT). Residues 104–127 (IVTLSVTFLFGYNTGLYLLTAISV) form a helical membrane-spanning segment. Over 128 to 148 (ERCLSVLYPIWYRCHRPKHQS) the chain is Cytoplasmic. The chain crosses the membrane as a helical span at residues 149-171 (AFVCALLWALSCLVTTMEYVMCI). Topologically, residues 172–184 (DSGEESHSQSDCR) are extracellular. Residues 185–205 (AVIIFIAILSFLVFTPLMLVS) form a helical membrane-spanning segment. The Cytoplasmic segment spans residues 206-223 (STILVVKIRKNTWASHSS). A helical membrane pass occupies residues 224–244 (KLYIVIMVTIIIFLIFAMPMR). Topologically, residues 245–262 (VLYLLYYEYWSTFGNLHN) are extracellular. The chain crosses the membrane as a helical span at residues 263–283 (ISLLFSTINSSANPFIYFFVG). The Cytoplasmic portion of the chain corresponds to 284 to 324 (SSKKKRFRESLKVVLTRAFKDEMQPRRQEGNGNTVSIETVV).

Belongs to the G-protein coupled receptor 1 family. Interacts with AGTR1. Interacts with FLNA (via filamin repeat 21); increases PKA-mediated phosphorylation of FLNA. Expressed in platelets.

The protein localises to the cell membrane. In terms of biological role, receptor for angiotensin 1-7. Acts specifically as a functional antagonist of AGTR1 (angiotensin-2 type 1 receptor), although it up-regulates AGTR1 receptor levels. Positive regulation of AGTR1 levels occurs through activation of the G-proteins GNA11 and GNAQ, and stimulation of the protein kinase C signaling cascade. The antagonist effect on AGTR1 function is probably due to AGTR1 being physically altered by MAS1. The sequence is that of Proto-oncogene Mas (Mas1) from Rattus norvegicus (Rat).